We begin with the raw amino-acid sequence, 207 residues long: Probable molybdenum cofactor guanylyltransferase (207 aa).

GTP-binding positions include 9-11 (LAG), Lys21, and Asp97. Asp97 provides a ligand contact to Mg(2+).

Belongs to the MobA family. Mg(2+) serves as cofactor.

It is found in the cytoplasm. The enzyme catalyses Mo-molybdopterin + GTP + H(+) = Mo-molybdopterin guanine dinucleotide + diphosphate. Its function is as follows. Transfers a GMP moiety from GTP to Mo-molybdopterin (Mo-MPT) cofactor (Moco or molybdenum cofactor) to form Mo-molybdopterin guanine dinucleotide (Mo-MGD) cofactor. In Trichormus variabilis (strain ATCC 29413 / PCC 7937) (Anabaena variabilis), this protein is Probable molybdenum cofactor guanylyltransferase.